A 339-amino-acid chain; its full sequence is MNWTRGKTLGRGSTATVSAATCHESGETLAVKSAEFHRSEFLQREAKILSSLNSPYVIGYRGCEITREPFHNNGEATTYSLLMEYAPYGTLTDVATKNGGFIDEARVVKYTRQILLGLEYIHNSKGIAHCDIKGSNVLVGENGEAKIADFGCAKWVEPEITEPVRGTPAFMAPEAARGERQGKESDIWAVGCTVIEMVTGSQPWIGADFTDPVSVLYRVGYLGELPELPCSLTEQAKDFLGKCLKKEATERWTASQLLNHPFLVNKEPELVTGLVTNSPTSVTDQMFWRSVEEEVSEDRSSWWECHEDERIGVLSWIGHVVVESTWDLDGEDWITVRRN.

The region spanning 3–263 (WTRGKTLGRG…ASQLLNHPFL (261 aa)) is the Protein kinase domain. ATP contacts are provided by residues 9–17 (LGRGSTATV) and Lys32. Catalysis depends on Asp131, which acts as the Proton acceptor. The residue at position 301 (Ser301) is a Phosphoserine.

It belongs to the protein kinase superfamily. Ser/Thr protein kinase family. Interacts with ABI1. Binds to MKK3. Associates with SRK2E within the nucleus. Post-translationally, autophosphorylated. In terms of processing, unstable protein degraded by the proteasome pathway; this degradation is promoted by ABI1, but blocked by ABA. As to expression, expressed in roots, leaves and flowers.

The protein resides in the nucleus. The catalysed reaction is L-seryl-[protein] + ATP = O-phospho-L-seryl-[protein] + ADP + H(+). It catalyses the reaction L-threonyl-[protein] + ATP = O-phospho-L-threonyl-[protein] + ADP + H(+). Its activity is regulated as follows. Kinase activity is activated by abscisic acid (ABA). Inhibited by ABI1. Activated by SRK2E. In terms of biological role, component of the abscisic acid (ABA) signaling pathway that acts as ABA signal transducer in the context of abiotic stresses. Triggers MPK1, MPK2, MPK7 and MPK14 activation in a MKK3-dependent manner and MPK6 activation in a MKK3-independent manner. Mediates the ABA-dependent activation of the MKK3-MPK7 module. Positive regulator of ABA responses leading to the induction of gene expression (e.g. RD29B and RAB18) and involved in various responses including stomatal development, stomatal movement, inhibition of germination and root growth. Promotes leaf senescence. This Arabidopsis thaliana (Mouse-ear cress) protein is Mitogen-activated protein kinase kinase kinase 18.